The primary structure comprises 233 residues: 2-C-methyl-D-erythritol 4-phosphate cytidylyltransferase (233 aa).

Belongs to the IspD/TarI cytidylyltransferase family. IspD subfamily.

It carries out the reaction 2-C-methyl-D-erythritol 4-phosphate + CTP + H(+) = 4-CDP-2-C-methyl-D-erythritol + diphosphate. It participates in isoprenoid biosynthesis; isopentenyl diphosphate biosynthesis via DXP pathway; isopentenyl diphosphate from 1-deoxy-D-xylulose 5-phosphate: step 2/6. Catalyzes the formation of 4-diphosphocytidyl-2-C-methyl-D-erythritol from CTP and 2-C-methyl-D-erythritol 4-phosphate (MEP). The protein is 2-C-methyl-D-erythritol 4-phosphate cytidylyltransferase of Nitrosomonas eutropha (strain DSM 101675 / C91 / Nm57).